The sequence spans 343 residues: Phenylalanine--tRNA ligase alpha subunit (343 aa).

A Mg(2+)-binding site is contributed by Glu256.

The protein belongs to the class-II aminoacyl-tRNA synthetase family. Phe-tRNA synthetase alpha subunit type 1 subfamily. As to quaternary structure, tetramer of two alpha and two beta subunits. Mg(2+) is required as a cofactor.

The protein resides in the cytoplasm. The enzyme catalyses tRNA(Phe) + L-phenylalanine + ATP = L-phenylalanyl-tRNA(Phe) + AMP + diphosphate + H(+). This is Phenylalanine--tRNA ligase alpha subunit from Aster yellows witches'-broom phytoplasma (strain AYWB).